Here is a 295-residue protein sequence, read N- to C-terminus: Small ribosomal subunit protein uS2 (295 aa).

The segment at 247-295 (TDKGLTSKNVSKLKQTKKFSKTKNIDEETNTEFEQALNDADENKNSDNA) is disordered.

The protein belongs to the universal ribosomal protein uS2 family.

In Rickettsia conorii (strain ATCC VR-613 / Malish 7), this protein is Small ribosomal subunit protein uS2.